We begin with the raw amino-acid sequence, 99 residues long: Large ribosomal subunit protein bL21 (99 aa).

It belongs to the bacterial ribosomal protein bL21 family. Part of the 50S ribosomal subunit. Contacts protein L20.

Functionally, this protein binds to 23S rRNA in the presence of protein L20. This is Large ribosomal subunit protein bL21 from Mycoplasmopsis agalactiae (strain NCTC 10123 / CIP 59.7 / PG2) (Mycoplasma agalactiae).